The sequence spans 151 residues: Transcriptional regulator MraZ (151 aa).

2 consecutive SpoVT-AbrB domains span residues 5–52 and 81–124; these read ANAI…PLPE and AVDL…DEDA.

It belongs to the MraZ family. In terms of assembly, forms oligomers.

The protein resides in the cytoplasm. The protein localises to the nucleoid. The chain is Transcriptional regulator MraZ from Pseudomonas aeruginosa (strain LESB58).